Here is a 388-residue protein sequence, read N- to C-terminus: MSKKNFLFTSESVSEGHPDKVADRISDAVVDAFLGADPYARVAVETLVTTNLIVMAGEVRGPASVNAALMDELARHAVKDIGYEQDGFHWKNAEIINRVHSQSADIAQGVDAAGDKDEGAGDQGIMFGYACNETPVLMPAPIYYSHEILKSLAEARHSGAAPQLLPDSKSQVTLEYRDGKPVRATSVVVSHQHVDGLSQADIKEIVRPHVKNVLPEGWMPAEDQFYVNPTGRFVIGGPDGDTGLTGRKIIVDTYGGAAPHGGGAFSGKDPTKVDRSAAYAARYLAKNVVASGLADKCVIQLSYAIGVSKPLSVYVDTSGTCKVDEDKLAVVLQQLVDLSPRGIRTHLGLNKPIYARTAAYGHFGRSPDADGGFSWEKTDLVEQLKKAF.

His17 contributes to the ATP binding site. Asp19 contributes to the Mg(2+) binding site. Glu45 contacts K(+). Positions 58 and 102 each coordinate L-methionine. The flexible loop stretch occupies residues 102–112; sequence QSADIAQGVDA. ATP contacts are provided by residues 167–169, 232–233, Asp241, 247–248, Ala264, and Lys268; these read DSK, RF, and RK. Position 241 (Asp241) interacts with L-methionine. Lys272 contacts L-methionine.

It belongs to the AdoMet synthase family. Homotetramer; dimer of dimers. The cofactor is Mg(2+). K(+) is required as a cofactor.

It is found in the cytoplasm. It carries out the reaction L-methionine + ATP + H2O = S-adenosyl-L-methionine + phosphate + diphosphate. The protein operates within amino-acid biosynthesis; S-adenosyl-L-methionine biosynthesis; S-adenosyl-L-methionine from L-methionine: step 1/1. Functionally, catalyzes the formation of S-adenosylmethionine (AdoMet) from methionine and ATP. The overall synthetic reaction is composed of two sequential steps, AdoMet formation and the subsequent tripolyphosphate hydrolysis which occurs prior to release of AdoMet from the enzyme. In Paramagnetospirillum magneticum (strain ATCC 700264 / AMB-1) (Magnetospirillum magneticum), this protein is S-adenosylmethionine synthase.